The primary structure comprises 109 residues: B melanoma antigen 3 (109 aa).

The first 17 residues, 1-17 (MAAGVVFLALSAQLLQA), serve as a signal peptide directing secretion.

The protein belongs to the BAGE family. As to expression, not expressed in normal tissues except in testis. Expressed in melanoma, bladder and lung carcinomas.

It localises to the secreted. Functionally, unknown. Candidate gene encoding tumor antigens. The chain is B melanoma antigen 3 (BAGE3) from Homo sapiens (Human).